We begin with the raw amino-acid sequence, 981 residues long: Alpha-mannosidase (981 aa).

Zn(2+) is bound by residues histidine 23, aspartate 25, and aspartate 145. Aspartate 145 (nucleophile) is an active-site residue. A glycan (N-linked (GlcNAc...) asparagine) is linked at asparagine 312. A Zn(2+)-binding site is contributed by histidine 386. 3 disulfides stabilise this stretch: cysteine 422/cysteine 432, cysteine 442/cysteine 450, and cysteine 800/cysteine 807. Asparagine 446 carries an N-linked (GlcNAc...) asparagine glycan. A disordered region spans residues 938-957 (KKMKWSVEGDNEQEPQAVRG).

The protein belongs to the glycosyl hydrolase 38 family. As to quaternary structure, dimer of dimers of heavy and light subunits. The cofactor is Zn(2+). Produced as a precursor which is then proteolytically cleaved into a 66kD heavy subunit and a 44kD light subunit. Cleavage probably occurs in protein bodies/protein storage vacuoles.

It localises to the protein storage vacuole. The enzyme catalyses Hydrolysis of terminal, non-reducing alpha-D-mannose residues in alpha-D-mannosides.. Inhibited by 2,3,4,6-tetra-O-acetyl-5-fluoro-beta-L-gulopyranosyl fluoride which acts as a slow substrate, doubling as a competitive inhibitor as it forms a high steady state concentration of glycosyl-enzyme intermediate that blocks the active site. Inhibited by 2,3,4,6-tetra-O-acetyl-5-fluoro-alpha-D-mannopyranosyl fluoride which also acts as a slow substrate but no intermediates accumulate. Inhibited by EDTA. Inhibited by metal ion Cu(2+). Inhibited by metal ions Fe(2+), Cd(2+) and Co(2+). Inhibited by metal ions Ag(+) and Hg(2+). Competitively inhibited by mannono-1-4-lactone and mannono-1-5-lactone. Inhibited by swainsonine but not by 1-desoxymannojirimycin. Inhibited by pyrrolidine-3,4-diol derivatives. In terms of biological role, liberates mannose from p-nitrophenyl-alpha-D-mannoside. Liberates mannose from further alpha-D-mannosides including methyl-, benzyl-alpha-D-mannoside, 1-6-linked di-, tri- and tetrasaccharides of alpha-D-mannose and mannosyl-rhamnose. Liberates mannose from various glycoproteins like ovalbumin and ovomucoid. Does not hydrolyze beta-D-mannosides. Has glycosyltransferase activity, forming disaccharides from mannose and lyxose but not from glucose, galactose, ribose, xylose or arabinose. This Canavalia ensiformis (Jack bean) protein is Alpha-mannosidase.